Consider the following 425-residue polypeptide: Intermediate conductance calcium-activated potassium channel protein 4 (425 aa).

The chain crosses the membrane as a helical span at residues 30-50 (LVLAGTGIGLMVLHAEMLWFL). A helical transmembrane segment spans residues 59-79 (LLVKCLITLSTAFLLCLIVVF). A helical transmembrane segment spans residues 105–121 (VAQILLELLVCGVHPVP). Residues 141 to 161 (GFLGEGEALLSLAMLLRLYLV) form a helical membrane-spanning segment. The chain crosses the membrane as a helical span at residues 205–225 (LLLGLTLGLWLTTAWVLSVAE). The segment at residues 239–259 (LWLIPITFLTIGYGDVVPGTL) is an intramembrane region (pore-forming). Residues 263-283 (IVCLCTGVMGVCCTALLVAVV) form a helical membrane-spanning segment. The interval 284–345 (ARKLEFNKAE…RRHQRKMLAA (62 aa)) is calmodulin-binding. Position 356 is a phosphohistidine (H356).

Belongs to the potassium channel KCNN family. KCa3.1/KCNN4 subfamily. Homodimer. Homotetramer. Heterotetramer of potassium channel proteins. Interacts with MTMR6; this interaction leads to selective dephosphorylation of PI(3)P in a lipid microdomain adjacent to KCNN4, resulting in a decrease of intermediate conductance calcium-activated potassium channel activity. Interacts (via the C-tail domain) with CALM1; the calmodulin binding is constitutive, does not require calcium and mediates calcium-dependent gating and four calmodulin molecules bind to one channel tetramer. Post-translationally, phosphorylation at His-356 by NDKB activates the intermediate conductance calcium-activated potassium channel activity, and conversely it's dephosphorylation by PHPT1 inhibits this activity.

It is found in the cell membrane. Its subcellular location is the cell projection. It localises to the ruffle membrane. The enzyme catalyses K(+)(in) = K(+)(out). Functionally, intermediate conductance calcium-activated potassium channel that mediates the voltage-independent transmembrane transfer of potassium across the cell membrane through a constitutive interaction with calmodulin which binds the intracellular calcium allowing its opening. The current is characterized by a voltage-independent activation, an intracellular calcium concentration increase-dependent activation and a single-channel conductance of about 25 picosiemens. Also presents an inwardly rectifying current, thus reducing its already small outward conductance of potassium ions, which is particularly the case when the membrane potential displays positive values, above + 20 mV. Controls calcium influx during vascular contractility by being responsible of membrane hyperpolarization induced by vasoactive factors in proliferative vascular smooth muscle cell types. Following calcium influx, the consecutive activation of KCNN4 channel leads to a hyperpolarization of the cell membrane potential and hence an increase of the electrical driving force for further calcium influx promoting sustained calcium entry in response to stimulation with chemotactic peptides. Required for maximal calcium influx and proliferation during the reactivation of naive T-cells. Plays a role in the late stages of EGF-induced macropinocytosis through activation by PI(3)P. This chain is Intermediate conductance calcium-activated potassium channel protein 4, found in Rattus norvegicus (Rat).